Reading from the N-terminus, the 81-residue chain is Photosystem I iron-sulfur center (81 aa).

4Fe-4S ferredoxin-type domains lie at 2–31 (SHAV…MVPW) and 39–68 (IASS…IRVY). Residues cysteine 11, cysteine 14, cysteine 17, cysteine 21, cysteine 48, cysteine 51, cysteine 54, and cysteine 58 each coordinate [4Fe-4S] cluster.

As to quaternary structure, the cyanobacterial PSI reaction center is composed of one copy each of PsaA,B,C,D,E,F,I,J,K,L,M and X, and forms trimeric complexes. The cofactor is [4Fe-4S] cluster.

The protein localises to the cellular thylakoid membrane. The enzyme catalyses reduced [plastocyanin] + hnu + oxidized [2Fe-2S]-[ferredoxin] = oxidized [plastocyanin] + reduced [2Fe-2S]-[ferredoxin]. Apoprotein for the two 4Fe-4S centers FA and FB of photosystem I (PSI); essential for photochemical activity. FB is the terminal electron acceptor of PSI, donating electrons to ferredoxin. The C-terminus interacts with PsaA/B/D and helps assemble the protein into the PSI complex. Required for binding of PsaD and PsaE to PSI. PSI is a plastocyanin/cytochrome c6-ferredoxin oxidoreductase, converting photonic excitation into a charge separation, which transfers an electron from the donor P700 chlorophyll pair to the spectroscopically characterized acceptors A0, A1, FX, FA and FB in turn. This Prochlorococcus marinus (strain MIT 9211) protein is Photosystem I iron-sulfur center.